Consider the following 202-residue polypeptide: UPF0637 protein Exig_2520 (202 aa).

The protein belongs to the UPF0637 family.

The chain is UPF0637 protein Exig_2520 from Exiguobacterium sibiricum (strain DSM 17290 / CCUG 55495 / CIP 109462 / JCM 13490 / 255-15).